A 446-amino-acid chain; its full sequence is Phosphoglucosamine mutase (446 aa).

Residue Ser-102 is the Phosphoserine intermediate of the active site. Ser-102, Asp-241, Asp-243, and Asp-245 together coordinate Mg(2+). Ser-102 bears the Phosphoserine mark.

Belongs to the phosphohexose mutase family. Mg(2+) serves as cofactor. Post-translationally, activated by phosphorylation.

It catalyses the reaction alpha-D-glucosamine 1-phosphate = D-glucosamine 6-phosphate. Its function is as follows. Catalyzes the conversion of glucosamine-6-phosphate to glucosamine-1-phosphate. This Yersinia enterocolitica serotype O:8 / biotype 1B (strain NCTC 13174 / 8081) protein is Phosphoglucosamine mutase.